The primary structure comprises 434 residues: Fc receptor-like protein 6 (434 aa).

The first 19 residues, 1–19 (MLLWTAVLLFVPCVGKTVW), serve as a signal peptide directing secretion. Ig-like C2-type domains follow at residues 20–95 (LYLQ…QTFT), 111–197 (PPVL…PQLE), and 207–293 (PVLT…KKLS). At 20–307 (LYLQAWPNPV…QVLFTPASNW (288 aa)) the chain is on the extracellular side. 3 cysteine pairs are disulfide-bonded: C39-C83, C132-C180, and C228-C276. N65 is a glycosylation site (N-linked (GlcNAc...) asparagine). A glycan (N-linked (GlcNAc...) asparagine) is linked at N273. A helical membrane pass occupies residues 308-328 (LVPWLPASLLGLMVIAAALLV). Residues 329-434 (YVRSWRKAGP…PLSDCEEVLC (106 aa)) lie on the Cytoplasmic side of the membrane. The ITIM motif signature appears at 369–374 (VVYSVV). At Y371 the chain carries Phosphotyrosine.

Interacts (tyrosine phosphorylated) with PTPN11. Interacts (tyrosine phosphorylated) with PTPN6, INPP5D, INPPL1 and GRB2. Interacts with class II MHC HLA-DR when the alpha chain is associated with a beta-1, beta-4 or a beta-5 but not a beta-3 chain. Phosphorylated on Tyr residues. Tyrosine phosphorylation induces association with phosphatase PTPN11, PTPN6, INPP5D, INPPL1 and GRB2. Expressed by cytolytic cells including NK cells, effector and effector-memory CD8(+) T-cells, and a subset of NKT cells (at protein level). Also expressed in gamma delta T cells and in a rare subset of effector CD4(+) T-cells (at protein level). Expressed in spleen, skin, peripheral blood leukocytes, liver, lung, bone marrow, small intestine and placenta. Expression among T-cells is greatly expanded in HIV-1 infected individuals, and includes not only effector and effector-memory CD8(+) T-cells but also populations of CD4(+) T-cells. Expression among CD8(+) T-cells and NK cells is expanded in individuals with chronic lymphocytic leukemia (CLL) but is reduced in PBMCs from patients with acute (AML), chronic myeloid leukemia (CML) and non-Hodgkin's lymphoma. Expression is higher in PBMCs and/or CD3(+) cells of patients with autoimmune diseases, such as rheumatoid arthritis (RA), systemic lupus erythematosus (SLE) and idiopathic thrombocytopenia purpura (ITP). In contrast, expression in CD3(+) cells from patients with lupus anticoagulans (LA) is higher.

It is found in the cell membrane. In terms of biological role, acts as a MHC class II receptor. When stimulated on its own, does not play a role in cytokine production or the release of cytotoxic granules by NK cells and cytotoxic CD8(+) T cells. Does not act as an Fc receptor. In Homo sapiens (Human), this protein is Fc receptor-like protein 6 (FCRL6).